A 20-amino-acid chain; its full sequence is Collagenolytic protease 28 kDa (20 aa).

Residues 1 to 20 form the Peptidase S1 domain; sequence IVGGQEASPGSWPXQVGLFF.

Belongs to the peptidase S1 family.

The catalysed reaction is Hydrolysis of proteins, with broad specificity for peptide bonds. Native collagen is cleaved about 75% of the length of the molecule from the N-terminus. Low activity on small molecule substrates of both trypsin and chymotrypsin.. This enzyme is a serine protease capable of degrading the native triple helix of collagen. The protein is Collagenolytic protease 28 kDa of Paralithodes camtschaticus (Red king crab).